The chain runs to 28 residues: Humanin-like 4 (28 aa).

Belongs to the humanin family. As to expression, highly expressed in testis. Also expressed in kidney, heart, skeletal muscles and brain.

The protein localises to the secreted. The protein resides in the cytoplasm. Plays a role as a neuroprotective and antiapoptotic factor. This Homo sapiens (Human) protein is Humanin-like 4.